The sequence spans 660 residues: MKSFAAKVEEGVKGIDGKPSVGPVYRNLLSEKGFPPIDSEITTAWDIFSKSVEKFPDNNMLGWRRIVDEKVGPYMWKTYKEVYEEVLQIGSALRAAGAEPGSRVGIYGVNCPQWIIAMEACAAHTLICVPLYDTLGSGAVDYIVEHAEIDFVFVQDTKIKGLLEPDCKCAKRLKAIVSFTNVSDELSHKASEIGVKTYSWIDFLHMGREKPEDTNPPKAFNICTIMYTSGTSGDPKGVVLTHQAVATFVVGMDLYMDQFEDKMTHDDVYLSFLPLAHILDRMNEEYFFRKGASVGYYHGNLNVLRDDIQELKPTYLAGVPRVFERIHEGIQKALQELNPRRRFIFNALYKHKLAWLNRGYSHSKASPMADFIAFRKIRDKLGGRIRLLVSGGAPLSPEIEEFLRVTCCCFVVQGYGLTETLGGTALGFPDEMCMLGTVGIPAVYNEIRLEEVSEMGYDPLGENPAGEICIRGQCMFSGYYKNPELTEEVMKDGWFHTGDIGEILPNGVLKIIDRKKNLIKLSQGEYVALEHLENIFGQNSVVQDIWVYGDSFKSMLVAVVVPNPETVNRWAKDLGFTKPFEELCSFPELKEHIISELKSTAEKNKLRKFEYIKAVTVETKPFDVERDLVTATLKNRRNNLLKYYQVQIDEMYRKLASKKI.

225-236 serves as a coordination point for ATP; that stretch reads IMYTSGTSGDPK. The segment at 492–516 is fatty acid-binding; sequence DGWFHTGDIGEILPNGVLKIIDRKK.

This sequence belongs to the ATP-dependent AMP-binding enzyme family. It depends on Mg(2+) as a cofactor. In terms of tissue distribution, epidermal-specific expression along the entire stem. In cauline leaves, was expressed over the entire leaf surface, most strongly in trichomes and guard cells, but not in mesophyll cells. In flowers, the expression was detected in the stigma and filaments of the stamens, and in the carpel was expressed specifically in ovaries. In roots, was expressed in primary and lateral roots, but not in the root tips.

The protein resides in the endoplasmic reticulum. The enzyme catalyses a long-chain fatty acid + ATP + CoA = a long-chain fatty acyl-CoA + AMP + diphosphate. It participates in lipid metabolism; fatty acid metabolism. Activation of long-chain fatty acids for both synthesis of cellular lipids, and degradation via beta-oxidation. Acts in both the wax and cutin pathways. Preferentially uses palmitate, palmitoleate, linoleate and eicosenoate. Seems to have a specific activity against very long-chain fatty acid (VLCFA) class with acids longer than 24 carbons (C(24)). In Arabidopsis thaliana (Mouse-ear cress), this protein is Long chain acyl-CoA synthetase 1 (LACS1).